The following is a 257-amino-acid chain: Large ribosomal subunit protein uL2 (257 aa).

Positions 207–231 (VEHPFGGGNHQHIGKPSTIRRDAPA) are disordered.

Belongs to the universal ribosomal protein uL2 family. Component of the large ribosomal subunit.

It is found in the cytoplasm. In terms of biological role, component of the large ribosomal subunit. The ribosome is a large ribonucleoprotein complex responsible for the synthesis of proteins in the cell. This is Large ribosomal subunit protein uL2 (rpl8) from Xenopus tropicalis (Western clawed frog).